The sequence spans 169 residues: Crossover junction endodeoxyribonuclease RuvC (169 aa).

Active-site residues include Asp11, Glu71, and Asp143. Mg(2+)-binding residues include Asp11, Glu71, and Asp143.

The protein belongs to the RuvC family. As to quaternary structure, homodimer which binds Holliday junction (HJ) DNA. The HJ becomes 2-fold symmetrical on binding to RuvC with unstacked arms; it has a different conformation from HJ DNA in complex with RuvA. In the full resolvosome a probable DNA-RuvA(4)-RuvB(12)-RuvC(2) complex forms which resolves the HJ. It depends on Mg(2+) as a cofactor.

It is found in the cytoplasm. It carries out the reaction Endonucleolytic cleavage at a junction such as a reciprocal single-stranded crossover between two homologous DNA duplexes (Holliday junction).. Functionally, the RuvA-RuvB-RuvC complex processes Holliday junction (HJ) DNA during genetic recombination and DNA repair. Endonuclease that resolves HJ intermediates. Cleaves cruciform DNA by making single-stranded nicks across the HJ at symmetrical positions within the homologous arms, yielding a 5'-phosphate and a 3'-hydroxyl group; requires a central core of homology in the junction. The consensus cleavage sequence is 5'-(A/T)TT(C/G)-3'. Cleavage occurs on the 3'-side of the TT dinucleotide at the point of strand exchange. HJ branch migration catalyzed by RuvA-RuvB allows RuvC to scan DNA until it finds its consensus sequence, where it cleaves and resolves the cruciform DNA. The sequence is that of Crossover junction endodeoxyribonuclease RuvC from Rhizobium etli (strain ATCC 51251 / DSM 11541 / JCM 21823 / NBRC 15573 / CFN 42).